Consider the following 440-residue polypeptide: Adenylosuccinate synthetase (440 aa).

GTP-binding positions include 11 to 17 (GDEGKGG) and 39 to 41 (GHT). The Proton acceptor role is filled by Asp-12. Residues Asp-12 and Gly-39 each coordinate Mg(2+). Residues 12–15 (DEGK), 37–40 (NAGH), Thr-127, Arg-141, Gln-230, Thr-245, and Arg-311 each bind IMP. His-40 serves as the catalytic Proton donor. 307 to 313 (TVTGRPR) contributes to the substrate binding site. GTP contacts are provided by residues Arg-313, 339 to 341 (HLD), and 424 to 426 (GVG).

It belongs to the adenylosuccinate synthetase family. Homodimer. Mg(2+) serves as cofactor.

It localises to the cytoplasm. The catalysed reaction is IMP + L-aspartate + GTP = N(6)-(1,2-dicarboxyethyl)-AMP + GDP + phosphate + 2 H(+). It participates in purine metabolism; AMP biosynthesis via de novo pathway; AMP from IMP: step 1/2. Its function is as follows. Plays an important role in the de novo pathway of purine nucleotide biosynthesis. Catalyzes the first committed step in the biosynthesis of AMP from IMP. This is Adenylosuccinate synthetase from Halobacterium salinarum (strain ATCC 29341 / DSM 671 / R1).